The primary structure comprises 472 residues: Protein c-ets-2-A (472 aa).

The PNT domain maps to 85-170; that stretch reads NTFNGFAKKR…EHLEEMMKEH (86 aa). Residues 366–446 constitute a DNA-binding region (ETS); the sequence is IQLWQFLLEL…SGKRYVYRFV (81 aa).

Belongs to the ETS family.

It is found in the nucleus. Probable transcription factor. In Xenopus laevis (African clawed frog), this protein is Protein c-ets-2-A (ets2-a).